A 315-amino-acid chain; its full sequence is MTPVRSAPSGRTGTYHVPVLLSEIETMLANATTVLDCTLGGGGHTAAFLERGVRVTGVDRDPRALAAARERLGEYERSGQFRAVLANYAALEEAGFSTDDRFDGILLDLGVSSHQFDDASRGFTFREGAPLDMRMGTDADLDAGELLNTIDEVDLSALLRAYADEPRAARMAREIVRRRERRPFATADDLVDAIRAVLGPRSGAPDFARIFQAVRIAVNDELSGLERALPALRDRLTPGGVLAIISYHSGEDRLVKNAFRDWSASCVCPPRQFVCTCRGRPLGDTITRKPVSATEQEIDQNTRARSARLRAWRSA.

S-adenosyl-L-methionine is bound by residues 42–44, Asp59, Phe96, Asp108, and Gln115; that span reads GGH.

The protein belongs to the methyltransferase superfamily. RsmH family.

It localises to the cytoplasm. The catalysed reaction is cytidine(1402) in 16S rRNA + S-adenosyl-L-methionine = N(4)-methylcytidine(1402) in 16S rRNA + S-adenosyl-L-homocysteine + H(+). Specifically methylates the N4 position of cytidine in position 1402 (C1402) of 16S rRNA. The polypeptide is Ribosomal RNA small subunit methyltransferase H (Gemmatimonas aurantiaca (strain DSM 14586 / JCM 11422 / NBRC 100505 / T-27)).